The following is a 319-amino-acid chain: ATP-dependent 6-phosphofructokinase (319 aa).

Position 11 (Gly-11) interacts with ATP. Residue Arg-21–Arg-25 coordinates ADP. ATP is bound by residues Arg-72–Tyr-73 and Gly-102–Ser-105. Asp-103 is a binding site for Mg(2+). Thr-125–Asp-127 provides a ligand contact to substrate. Asp-127 functions as the Proton acceptor in the catalytic mechanism. Position 154 (Arg-154) interacts with ADP. Substrate contacts are provided by residues Arg-162 and Met-169–Arg-171. ADP is bound by residues Gly-185–Glu-187, Arg-211, and Lys-213–His-215. Substrate is bound by residues Glu-222, Arg-243, and His-249–Arg-252.

The protein belongs to the phosphofructokinase type A (PFKA) family. ATP-dependent PFK group I subfamily. Prokaryotic clade 'B1' sub-subfamily. Homotetramer. The cofactor is Mg(2+).

The protein resides in the cytoplasm. It catalyses the reaction beta-D-fructose 6-phosphate + ATP = beta-D-fructose 1,6-bisphosphate + ADP + H(+). It participates in carbohydrate degradation; glycolysis; D-glyceraldehyde 3-phosphate and glycerone phosphate from D-glucose: step 3/4. Its activity is regulated as follows. Allosterically activated by ADP and other diphosphonucleosides, and allosterically inhibited by phosphoenolpyruvate. Functionally, catalyzes the phosphorylation of D-fructose 6-phosphate to fructose 1,6-bisphosphate by ATP, the first committing step of glycolysis. The chain is ATP-dependent 6-phosphofructokinase from Listeria monocytogenes serotype 4a (strain HCC23).